Reading from the N-terminus, the 140-residue chain is Small ribosomal subunit protein uS12 (140 aa).

The tract at residues 1–20 (MPTINQLVRKGRQSKVVKSD) is disordered. Asp102 bears the 3-methylthioaspartic acid mark. Residues 121-140 (DGRMQGRSKYGTKRPKAAKK) are disordered. The span at 130–140 (YGTKRPKAAKK) shows a compositional bias: basic residues.

The protein belongs to the universal ribosomal protein uS12 family. As to quaternary structure, part of the 30S ribosomal subunit. Contacts proteins S8 and S17. May interact with IF1 in the 30S initiation complex.

Its function is as follows. With S4 and S5 plays an important role in translational accuracy. In terms of biological role, interacts with and stabilizes bases of the 16S rRNA that are involved in tRNA selection in the A site and with the mRNA backbone. Located at the interface of the 30S and 50S subunits, it traverses the body of the 30S subunit contacting proteins on the other side and probably holding the rRNA structure together. The combined cluster of proteins S8, S12 and S17 appears to hold together the shoulder and platform of the 30S subunit. The chain is Small ribosomal subunit protein uS12 from Exiguobacterium sibiricum (strain DSM 17290 / CCUG 55495 / CIP 109462 / JCM 13490 / 255-15).